The sequence spans 206 residues: Guanylate kinase (206 aa).

The Guanylate kinase-like domain occupies 7 to 185 (GLLIVISGPS…AVEKIRAIII (179 aa)). Residue 14-21 (GPSGAGKG) participates in ATP binding.

This sequence belongs to the guanylate kinase family.

It is found in the cytoplasm. The catalysed reaction is GMP + ATP = GDP + ADP. Functionally, essential for recycling GMP and indirectly, cGMP. This chain is Guanylate kinase, found in Caldanaerobacter subterraneus subsp. tengcongensis (strain DSM 15242 / JCM 11007 / NBRC 100824 / MB4) (Thermoanaerobacter tengcongensis).